The following is a 2006-amino-acid chain: E3 ubiquitin-protein ligase PRT6 (2006 aa).

The UBR-type zinc-finger motif lies at 119 to 189; sequence GVCGSVWGQN…PDGFCSNHKG (71 aa). Disordered stretches follow at residues 1167 to 1186 and 1338 to 1380; these read LSSS…SDSV and DHQP…AGSD. Basic and acidic residues predominate over residues 1338–1348; it reads DHQPHEAENCS. Residues 1349–1360 show a composition bias toward polar residues; sequence EKNSVGGPSTLQ. Over residues 1364 to 1377 the composition is skewed to basic and acidic residues; the sequence is PDIRSRQTSRRPDA. The RING-type; degenerate zinc finger occupies 1395–1440; the sequence is CGHAVHQSCLERYLKSLKERSGRRTVFEGAHIVDLKKKEFLCPVCR.

This sequence belongs to the E3 ubiquitin-protein ligase UBR1-like family.

The catalysed reaction is S-ubiquitinyl-[E2 ubiquitin-conjugating enzyme]-L-cysteine + [acceptor protein]-L-lysine = [E2 ubiquitin-conjugating enzyme]-L-cysteine + N(6)-ubiquitinyl-[acceptor protein]-L-lysine.. Its pathway is protein modification; protein ubiquitination. Its function is as follows. Ubiquitin protein ligase which is a component of the N-end rule pathway with arginine specificity, and functions with the arginyltransferases ATE1 and ATE2. Recognizes and binds to proteins bearing specific N-terminal residues that are destabilizing according to the N-end rule, leading to their ubiquitination and subsequent degradation. Does not participate in degradation of proteins with N-terminal Phe or Leu. The N-end rule pathway regulates seed after-ripening, seedling sugar sensitivity, seedling lipid breakdown, and abscisic acid (ABA) sensitivity of germination. The N-end rule pathway regulates various aspects of leaf and shoot development. Involved in the ubiquitination and subsequent degradation of RAP2-12, an activator of hypoxic gene expression. The ubiquitination occurs after the N-arginylation of RAP2-12 by ATE1 or ATE2 under aerobic conditions. The end-rule pathway plays a role in regulating the timing and amplitude of the immune response following infection with the bacterial pathogen Pseudomonas syringae pv tomato. Regulates the biosynthesis of plant-defense metabolites such as glucosinolates, and the biosynthesis and response to the phytohormone jasmonate (JA), which plays a key role in plant immunity. Controls the expression of specific defense-response genes, activates the synthesis pathway for the phytoalexin camalexin, and influences basal resistance to the hemibiotroph pathogen Pseudomonas syringae pv tomato. Coordinates the mobilization of seed storage reserves and regulates the abundance and activities of several proteases following seed germination. The polypeptide is E3 ubiquitin-protein ligase PRT6 (Arabidopsis thaliana (Mouse-ear cress)).